Here is a 524-residue protein sequence, read N- to C-terminus: Na(+)/H(+) antiporter NhaB (524 aa).

Transmembrane regions (helical) follow at residues 13 to 33 (FLGN…IINP), 98 to 118 (LLLV…LFVF), 140 to 160 (AFLS…SVSV), 239 to 259 (FFIR…LVCL), 304 to 324 (AIIG…VGLV), 325 to 345 (GLSV…HSLG), 358 to 378 (LTVF…TPII), 448 to 468 (ATPN…APLI), and 479 to 499 (ALPY…FLLV).

The protein belongs to the NhaB Na(+)/H(+) (TC 2.A.34) antiporter family.

The protein resides in the cell inner membrane. It catalyses the reaction 2 Na(+)(in) + 3 H(+)(out) = 2 Na(+)(out) + 3 H(+)(in). Its function is as follows. Na(+)/H(+) antiporter that extrudes sodium in exchange for external protons. The chain is Na(+)/H(+) antiporter NhaB from Yersinia pseudotuberculosis serotype O:3 (strain YPIII).